The sequence spans 416 residues: Imidazolonepropionase (416 aa).

Fe(3+) contacts are provided by His82 and His84. His82 and His84 together coordinate Zn(2+). 3 residues coordinate 4-imidazolone-5-propanoate: Arg91, Tyr154, and His187. Tyr154 provides a ligand contact to N-formimidoyl-L-glutamate. His252 contacts Fe(3+). His252 is a binding site for Zn(2+). 4-imidazolone-5-propanoate is bound at residue Glu255. A Fe(3+)-binding site is contributed by Asp326. Asp326 is a Zn(2+) binding site. Asn328 and Gly330 together coordinate N-formimidoyl-L-glutamate. Ser331 is a 4-imidazolone-5-propanoate binding site.

The protein belongs to the metallo-dependent hydrolases superfamily. HutI family. Requires Zn(2+) as cofactor. Fe(3+) serves as cofactor.

It is found in the cytoplasm. The catalysed reaction is 4-imidazolone-5-propanoate + H2O = N-formimidoyl-L-glutamate. Its pathway is amino-acid degradation; L-histidine degradation into L-glutamate; N-formimidoyl-L-glutamate from L-histidine: step 3/3. Functionally, catalyzes the hydrolytic cleavage of the carbon-nitrogen bond in imidazolone-5-propanoate to yield N-formimidoyl-L-glutamate. It is the third step in the universal histidine degradation pathway. This chain is Imidazolonepropionase, found in Parabacteroides distasonis (strain ATCC 8503 / DSM 20701 / CIP 104284 / JCM 5825 / NCTC 11152).